Here is a 400-residue protein sequence, read N- to C-terminus: Large envelope protein (400 aa).

Met-1 is modified (N-acetylmethionine). 2 disordered regions span residues 1-55 (MGGW…WPEA) and 85-118 (LTTV…SHPQ). Gly-2 carries N-myristoyl glycine; by host lipidation. The interval 2–119 (GGWSSKPRQG…PPLRDSHPQA (118 aa)) is pre-S1. Positions 2–174 (GGWSSKPRQG…FSRTGDPAPN (173 aa)) are pre-S. Topologically, residues 2 to 181 (GGWSSKPRQG…APNMESTTSG (180 aa)) are virion surface; in external conformation. At 2-253 (GGWSSKPRQG…PGYRWMCLRR (252 aa)) the chain is on the intravirion; in internal conformation side. Trp-4 carries an N-linked (GlcNAc...) asparagine glycan. Residues 96–106 (STNRQSGRQPT) show a composition bias toward polar residues. The tract at residues 120–174 (MQWNSTTFHQALLDPRVKGLYFPAGGSSSGTVNPVPTTASPISSIFSRTGDPAPN) is pre-S2. A helical transmembrane segment spans residues 182-202 (FLGPLLVLQAGFFLLTRILTI). The Intravirion; in external conformation segment spans residues 203–253 (PQSLDSWWTSLNFLGGAPTCPGQNSQSPTSNHSPTSCPPICPGYRWMCLRR). The chain crosses the membrane as a helical span at residues 254–274 (FIIFLFILLLCLIFLLVLLDF). Residues 275-348 (QGMLPVCPLL…WASVRFSWLS (74 aa)) lie on the Virion surface side of the membrane. Residue Asn-320 is glycosylated (N-linked (GlcNAc...) asparagine; by host). The chain crosses the membrane as a helical span at residues 349-369 (LLVPFVQWFAGLSPTVWLSVI). At 370-375 (WMMWYW) the chain is on the intravirion side. Residues 376–398 (GPSLYNILSPFLPLLPIFFCLWV) form a helical membrane-spanning segment. The Virion surface portion of the chain corresponds to 399–400 (YI).

This sequence belongs to the orthohepadnavirus major surface antigen family. In its internal form (Li-HBsAg), interacts with the capsid protein and with the isoform S. Interacts with host chaperone CANX. In terms of assembly, associates with host chaperone CANX through its pre-S2 N glycan; this association may be essential for isoform M proper secretion. As to quaternary structure, interacts with isoform L. Interacts with the antigens of satellite virus HDV (HDVAgs); this interaction is required for encapsidation of HDV genomic RNA. In terms of processing, isoform M is N-terminally acetylated by host at a ratio of 90%, and N-glycosylated by host at the pre-S2 region. Myristoylated.

The protein resides in the virion membrane. Its function is as follows. The large envelope protein exists in two topological conformations, one which is termed 'external' or Le-HBsAg and the other 'internal' or Li-HBsAg. In its external conformation the protein attaches the virus to cell receptors and thereby initiating infection. This interaction determines the species specificity and liver tropism. This attachment induces virion internalization predominantly through caveolin-mediated endocytosis. The large envelope protein also assures fusion between virion membrane and endosomal membrane. In its internal conformation the protein plays a role in virion morphogenesis and mediates the contact with the nucleocapsid like a matrix protein. The middle envelope protein plays an important role in the budding of the virion. It is involved in the induction of budding in a nucleocapsid independent way. In this process the majority of envelope proteins bud to form subviral lipoprotein particles of 22 nm of diameter that do not contain a nucleocapsid. In Hepatitis B virus genotype C subtype ar (isolate Japan/S-207/1988) (HBV-C), this protein is Large envelope protein.